A 78-amino-acid polypeptide reads, in one-letter code: Small ribosomal subunit protein bS21A (78 aa).

Positions 30–52 (MKARSAYEKPSEKRAREKGEAVR) are enriched in basic and acidic residues. The disordered stretch occupies residues 30–78 (MKARSAYEKPSEKRAREKGEAVRRQRKLARKKLQREGLLPAPKKAVRAR). Residues 53-62 (RQRKLARKKL) are compositionally biased toward basic residues.

Belongs to the bacterial ribosomal protein bS21 family.

This is Small ribosomal subunit protein bS21A from Rhizobium etli (strain ATCC 51251 / DSM 11541 / JCM 21823 / NBRC 15573 / CFN 42).